The primary structure comprises 364 residues: Adenine deaminase (364 aa).

Residues His25, His27, and His221 each contribute to the Zn(2+) site. Catalysis depends on Glu224, which acts as the Proton donor. Residue Asp301 participates in Zn(2+) binding. Asp302 lines the substrate pocket.

Belongs to the metallo-dependent hydrolases superfamily. Adenosine and AMP deaminases family. Adenine deaminase type 2 subfamily. It depends on Zn(2+) as a cofactor.

The protein resides in the cytoplasm. It localises to the nucleus. It catalyses the reaction adenine + H2O + H(+) = hypoxanthine + NH4(+). Catalyzes the hydrolytic deamination of adenine to hypoxanthine. Plays an important role in the purine salvage pathway and in nitrogen catabolism. Has no activity with adenosine as a substrate. The sequence is that of Adenine deaminase (aah1) from Emericella nidulans (strain FGSC A4 / ATCC 38163 / CBS 112.46 / NRRL 194 / M139) (Aspergillus nidulans).